Consider the following 187-residue polypeptide: Pyridoxal 5'-phosphate synthase subunit PdxT (187 aa).

47–49 (GES) is a binding site for L-glutamine. Residue C76 is the Nucleophile of the active site. Residues R102 and 128–129 (IR) contribute to the L-glutamine site. Active-site charge relay system residues include H165 and E167.

Belongs to the glutaminase PdxT/SNO family. In the presence of PdxS, forms a dodecamer of heterodimers. Only shows activity in the heterodimer.

The catalysed reaction is aldehydo-D-ribose 5-phosphate + D-glyceraldehyde 3-phosphate + L-glutamine = pyridoxal 5'-phosphate + L-glutamate + phosphate + 3 H2O + H(+). It catalyses the reaction L-glutamine + H2O = L-glutamate + NH4(+). It functions in the pathway cofactor biosynthesis; pyridoxal 5'-phosphate biosynthesis. In terms of biological role, catalyzes the hydrolysis of glutamine to glutamate and ammonia as part of the biosynthesis of pyridoxal 5'-phosphate. The resulting ammonia molecule is channeled to the active site of PdxS. The polypeptide is Pyridoxal 5'-phosphate synthase subunit PdxT (Methanococcus maripaludis (strain DSM 14266 / JCM 13030 / NBRC 101832 / S2 / LL)).